The chain runs to 276 residues: Large ribosomal subunit protein uL2 (276 aa).

2 disordered regions span residues Arg35–His58 and Arg218–Lys276. A compositionally biased stretch (basic residues) spans Arg255 to Lys276.

It belongs to the universal ribosomal protein uL2 family. In terms of assembly, part of the 50S ribosomal subunit. Forms a bridge to the 30S subunit in the 70S ribosome.

In terms of biological role, one of the primary rRNA binding proteins. Required for association of the 30S and 50S subunits to form the 70S ribosome, for tRNA binding and peptide bond formation. It has been suggested to have peptidyltransferase activity; this is somewhat controversial. Makes several contacts with the 16S rRNA in the 70S ribosome. This is Large ribosomal subunit protein uL2 from Bifidobacterium adolescentis (strain ATCC 15703 / DSM 20083 / NCTC 11814 / E194a).